Reading from the N-terminus, the 169-residue chain is YEDRNFQGRCYECSGDCADLHSYFSRCNSIKVDSGCWMLYERPNFLGHQYFLKKGEYPDYQQWMGFSDSVRSCKVIPQQKGPHKMKIYEKEELKGQMLEVLEDCPSVFELFKNHDINSCNVLEGHWIFYEQPNYRGRQYFLKPGEYKRFSDWGSLNARVSSFRRVLDSC.

Beta/gamma crystallin 'Greek key' domains follow at residues Y1–S34 and G35–P77. Positions Q78–P82 are connecting peptide. Beta/gamma crystallin 'Greek key' domains follow at residues H83–E123 and G124–L166.

The protein belongs to the beta/gamma-crystallin family. Monomer.

Crystallins are the dominant structural components of the vertebrate eye lens. The polypeptide is Gamma-crystallin 2 (Rana temporaria (European common frog)).